Here is a 751-residue protein sequence, read N- to C-terminus: Catalase-peroxidase (751 aa).

Residues 92-240 (WHSAGTYRVT…VAAAHMGLIY (149 aa)) constitute a cross-link (tryptophyl-tyrosyl-methioninium (Trp-Tyr) (with M-266)). The active-site Proton acceptor is the His93. The tryptophyl-tyrosyl-methioninium (Tyr-Met) (with W-92) cross-link spans 240 to 266 (YVNPEGPDGVPDPIAAARDIRTTFHRM). Heme b is bound at residue His281.

Belongs to the peroxidase family. Peroxidase/catalase subfamily. In terms of assembly, homodimer or homotetramer. It depends on heme b as a cofactor. Post-translationally, formation of the three residue Trp-Tyr-Met cross-link is important for the catalase, but not the peroxidase activity of the enzyme.

It is found in the cytoplasm. It catalyses the reaction H2O2 + AH2 = A + 2 H2O. The catalysed reaction is 2 H2O2 = O2 + 2 H2O. Its function is as follows. Bifunctional enzyme with both catalase and broad-spectrum peroxidase activity. In Phaeosphaeria nodorum (strain SN15 / ATCC MYA-4574 / FGSC 10173) (Glume blotch fungus), this protein is Catalase-peroxidase.